Reading from the N-terminus, the 448-residue chain is Probable glycine dehydrogenase (decarboxylating) subunit 1 (448 aa).

The protein belongs to the GcvP family. N-terminal subunit subfamily. As to quaternary structure, the glycine cleavage system is composed of four proteins: P, T, L and H. In this organism, the P 'protein' is a heterodimer of two subunits.

The catalysed reaction is N(6)-[(R)-lipoyl]-L-lysyl-[glycine-cleavage complex H protein] + glycine + H(+) = N(6)-[(R)-S(8)-aminomethyldihydrolipoyl]-L-lysyl-[glycine-cleavage complex H protein] + CO2. In terms of biological role, the glycine cleavage system catalyzes the degradation of glycine. The P protein binds the alpha-amino group of glycine through its pyridoxal phosphate cofactor; CO(2) is released and the remaining methylamine moiety is then transferred to the lipoamide cofactor of the H protein. This chain is Probable glycine dehydrogenase (decarboxylating) subunit 1 (gcvPA), found in Bacillus subtilis (strain 168).